Reading from the N-terminus, the 278-residue chain is Multidrug-efflux transporter 1 regulator (278 aa).

The 71-residue stretch at 5 to 75 (YYSIGEVSKL…LEEMKKAQDL (71 aa)) folds into the HTH merR-type domain. Residues 8–27 (IGEVSKLANVSIKALRYYDK) constitute a DNA-binding region (H-T-H motif).

As to quaternary structure, binds DNA as a homodimer.

In terms of biological role, activates transcription of the bmr gene in response to structurally dissimilar drugs. Binds rhodamine as an inducer. The sequence is that of Multidrug-efflux transporter 1 regulator (bmrR) from Bacillus subtilis (strain 168).